Consider the following 373-residue polypeptide: Protein CAF40 (373 aa).

The interval methionine 1–methionine 91 is disordered. The segment covering asparagine 11–proline 22 has biased composition (gly residues). The segment covering glycine 50 to asparagine 88 has biased composition (low complexity).

It belongs to the CNOT9 family. Subunit of the 1.0 MDa CCR4-NOT core complex that contains CCR4, CAF1, NOT1, NOT2, NOT3, NOT4, NOT5, CAF40 and CAF130. In the complex interacts with NOT1. The core complex probably is part of a less characterized 1.9 MDa CCR4-NOT complex.

The protein resides in the cytoplasm. Its subcellular location is the nucleus. Its function is as follows. Acts as a component of the CCR4-NOT core complex, which in the nucleus seems to be a general transcription factor, and in the cytoplasm the major mRNA deadenylase involved in mRNA turnover. This chain is Protein CAF40 (CAF40), found in Saccharomyces cerevisiae (strain ATCC 204508 / S288c) (Baker's yeast).